The primary structure comprises 349 residues: Phosphate acyltransferase (349 aa).

Belongs to the PlsX family. In terms of assembly, homodimer. Probably interacts with PlsY.

Its subcellular location is the cytoplasm. The catalysed reaction is a fatty acyl-[ACP] + phosphate = an acyl phosphate + holo-[ACP]. The protein operates within lipid metabolism; phospholipid metabolism. In terms of biological role, catalyzes the reversible formation of acyl-phosphate (acyl-PO(4)) from acyl-[acyl-carrier-protein] (acyl-ACP). This enzyme utilizes acyl-ACP as fatty acyl donor, but not acyl-CoA. The sequence is that of Phosphate acyltransferase from Rhodospirillum rubrum (strain ATCC 11170 / ATH 1.1.1 / DSM 467 / LMG 4362 / NCIMB 8255 / S1).